The following is a 117-amino-acid chain: Ig lambda-1 chain V region (117 aa).

Residues Met-1 to Ser-20 form the signal peptide. Gln-21 carries the post-translational modification Pyrrolidone carboxylic acid. In terms of domain architecture, Ig-like spans Gln-21–His-117.

The protein is Ig lambda-1 chain V region of Mus musculus (Mouse).